Here is a 154-residue protein sequence, read N- to C-terminus: Myoglobin (154 aa).

Residues Gly-2–Lys-148 form the Globin domain. The residue at position 4 (Ser-4) is a Phosphoserine. Residue His-65 participates in nitrite binding. His-65 is an O2 binding site. Thr-68 carries the post-translational modification Phosphothreonine. His-94 lines the heme b pocket.

This sequence belongs to the globin family. In terms of assembly, monomeric.

The protein resides in the cytoplasm. It localises to the sarcoplasm. The catalysed reaction is Fe(III)-heme b-[protein] + nitric oxide + H2O = Fe(II)-heme b-[protein] + nitrite + 2 H(+). The enzyme catalyses H2O2 + AH2 = A + 2 H2O. Functionally, monomeric heme protein which primary function is to store oxygen and facilitate its diffusion within muscle tissues. Reversibly binds oxygen through a pentacoordinated heme iron and enables its timely and efficient release as needed during periods of heightened demand. Depending on the oxidative conditions of tissues and cells, and in addition to its ability to bind oxygen, it also has a nitrite reductase activity whereby it regulates the production of bioactive nitric oxide. Under stress conditions, like hypoxia and anoxia, it also protects cells against reactive oxygen species thanks to its pseudoperoxidase activity. The protein is Myoglobin (MB) of Mesoplodon carlhubbsi (Hubb's beaked whale).